The chain runs to 418 residues: NADH-quinone oxidoreductase subunit D (418 aa).

The protein belongs to the complex I 49 kDa subunit family. As to quaternary structure, NDH-1 is composed of 14 different subunits. Subunits NuoB, C, D, E, F, and G constitute the peripheral sector of the complex.

The protein localises to the cell inner membrane. It catalyses the reaction a quinone + NADH + 5 H(+)(in) = a quinol + NAD(+) + 4 H(+)(out). Its function is as follows. NDH-1 shuttles electrons from NADH, via FMN and iron-sulfur (Fe-S) centers, to quinones in the respiratory chain. The immediate electron acceptor for the enzyme in this species is believed to be ubiquinone. Couples the redox reaction to proton translocation (for every two electrons transferred, four hydrogen ions are translocated across the cytoplasmic membrane), and thus conserves the redox energy in a proton gradient. This Neisseria meningitidis serogroup C / serotype 2a (strain ATCC 700532 / DSM 15464 / FAM18) protein is NADH-quinone oxidoreductase subunit D.